Consider the following 213-residue polypeptide: LexA repressor (213 aa).

A DNA-binding region (H-T-H motif) is located at residues 31 to 51 (RAEISRELGFRSPNAAEEYLK). Residues S129 and K166 each act as for autocatalytic cleavage activity in the active site.

Belongs to the peptidase S24 family. As to quaternary structure, homodimer.

The catalysed reaction is Hydrolysis of Ala-|-Gly bond in repressor LexA.. Represses a number of genes involved in the response to DNA damage (SOS response), including recA and lexA. In the presence of single-stranded DNA, RecA interacts with LexA causing an autocatalytic cleavage which disrupts the DNA-binding part of LexA, leading to derepression of the SOS regulon and eventually DNA repair. The protein is LexA repressor of Mannheimia succiniciproducens (strain KCTC 0769BP / MBEL55E).